A 769-amino-acid chain; its full sequence is Spastin (769 aa).

Positions 1–100 (MVRTKNQSSS…TSGNVPRGGQ (100 aa)) are disordered. Over 1–113 (MVRTKNQSSS…KQNLYVVSFP (113 aa)) the chain is Cytoplasmic. Residues 1 to 201 (MVRTKNQSSS…QTLEMAASRG (201 aa)) are required for localization to punctate cytoplasmic foci. Residues 8–19 (SSSSSASSSTKS) are compositionally biased toward low complexity. Residues 24-33 (SGGGGGGGGS) show a composition bias toward gly residues. Over residues 54–63 (SSKLSSNRQR) the composition is skewed to polar residues. Positions 64 to 78 (TTTTITTTTTTPGSS) are enriched in low complexity. The segment at residues 114–134 (IIFLFNVLRSLIYQLFCIFRY) is an intramembrane region (helical). The Cytoplasmic segment spans residues 135–769 (LYGASTKVIY…WSQDYGDITI (635 aa)). The segment at 199–769 (SRGGTGAGGY…WSQDYGDITI (571 aa)) is sufficient for interaction with microtubules and microtubule severing. The 76-residue stretch at 224–299 (HRRAFEYISK…SMARDRLHFL (76 aa)) folds into the MIT domain. The disordered stretch occupies residues 314 to 462 (KEQPKKQLPH…NAASGSGSGA (149 aa)). Low complexity predominate over residues 334–344 (TTTSSGSSSSS). 2 stretches are compositionally biased toward polar residues: residues 395-413 (NKSQ…STSV) and 434-450 (QFSS…RTPI). The span at 451–462 (NNNAASGSGSGA) shows a compositional bias: low complexity. A required for interaction with microtubules region spans residues 452–466 (NNAASGSGSGASTPL). ATP is bound at residue 534-541 (GPPGNGKT).

It belongs to the AAA ATPase family. Spastin subfamily. In terms of assembly, homohexamer. The homohexamer is stabilized by ATP-binding. The homohexamer may adopt a ring conformation through which microtubules pass prior to being severed. Interacts with microtubules. Interacts with atl; may be involved in microtubule dynamics.

Its subcellular location is the membrane. It localises to the cytoplasm. The protein localises to the cytoskeleton. The protein resides in the microtubule organizing center. It is found in the centrosome. Its subcellular location is the chromosome. It localises to the lipid droplet. The catalysed reaction is n ATP + n H2O + a microtubule = n ADP + n phosphate + (n+1) alpha/beta tubulin heterodimers.. ATP-dependent microtubule severing protein. Stimulates microtubule minus-end depolymerization and poleward microtubule flux in the mitotic spindle. Regulates microtubule stability in the neuromuscular junction synapse. Involved in lipid metabolism by regulating the size and distribution of lipid droplets. Involved in axon regeneration by regulating microtubule severing. In Drosophila virilis (Fruit fly), this protein is Spastin.